The primary structure comprises 252 residues: 5-oxoprolinase subunit A 1 (252 aa).

This sequence belongs to the LamB/PxpA family. As to quaternary structure, forms a complex composed of PxpA, PxpB and PxpC.

It carries out the reaction 5-oxo-L-proline + ATP + 2 H2O = L-glutamate + ADP + phosphate + H(+). Catalyzes the cleavage of 5-oxoproline to form L-glutamate coupled to the hydrolysis of ATP to ADP and inorganic phosphate. This chain is 5-oxoprolinase subunit A 1, found in Pseudomonas aeruginosa (strain ATCC 15692 / DSM 22644 / CIP 104116 / JCM 14847 / LMG 12228 / 1C / PRS 101 / PAO1).